Consider the following 232-residue polypeptide: Zinc finger protein RTS2 (232 aa).

A C2H2-type zinc finger spans residues 24 to 48; sequence YYCQICQRQCKDANGFQSHNKSPSH. 2 disordered regions span residues 180-199 and 211-232; these read AKRQ…ISGD and GNGR…IKFR.

It is found in the nucleus. The protein is Zinc finger protein RTS2 (RTS2) of Saccharomyces cerevisiae (strain ATCC 204508 / S288c) (Baker's yeast).